Here is a 361-residue protein sequence, read N- to C-terminus: DNA replication and repair protein RecF (361 aa).

Position 30 to 37 (30 to 37 (GANGSGKT)) interacts with ATP.

It belongs to the RecF family.

It is found in the cytoplasm. Functionally, the RecF protein is involved in DNA metabolism; it is required for DNA replication and normal SOS inducibility. RecF binds preferentially to single-stranded, linear DNA. It also seems to bind ATP. The sequence is that of DNA replication and repair protein RecF from Glaesserella parasuis serovar 5 (strain SH0165) (Haemophilus parasuis).